The primary structure comprises 192 residues: uncharacterized protein (192 aa).

The signal sequence occupies residues 1–24 (MSGVLSCVLRACACAGLCCWVCMG). A disordered region spans residues 140–192 (RAGADEGAGGNAAGCPEDTRGFARSPGDLMGGMNGDLGDEGETGEGGDNGAGE).

This is an uncharacterized protein from Human herpesvirus 6A (strain Uganda-1102) (HHV-6 variant A).